A 3423-amino-acid chain; its full sequence is Genome polyprotein (3423 aa).

Residues 1–25 (MKNPKKKSGGFRIVNMLKRGVARVS) form a disordered region. Over 1–104 (MKNPKKKSGG…INARKEKKRR (104 aa)) the chain is Cytoplasmic. A hydrophobic; homodimerization of capsid protein C region spans residues 37-72 (LLLGHGPIRMVLAILAFLRFTAIKPSLGLINRWGSV). Residues 105–122 (GADTSVGIVGLLLTTAMA) constitute a propeptide, ER anchor for capsid protein C, removed in mature form by serine protease NS3. A helical membrane pass occupies residues 105–125 (GADTSVGIVGLLLTTAMAAEV). At 126–249 (TRRGSAYYMY…YTKHLIRVEN (124 aa)) the chain is on the extracellular side. N192 carries N-linked (GlcNAc...) asparagine; by host glycosylation. Residues 250-269 (WIFRNPGFALAAAAIAWLLG) form a helical membrane-spanning segment. Residues 270 to 274 (SSTSQ) lie on the Cytoplasmic side of the membrane. The helical transmembrane segment at 275-290 (KVIYLVMILLIAPAYS) threads the bilayer. Residues 291–745 (IRCIGVSNRD…HQIFGAAFKS (455 aa)) lie on the Extracellular side of the membrane. Residue K328 forms a Glycyl lysine isopeptide (Lys-Gly) (interchain with G-Cter in ubiquitin) linkage. 2 disulfides stabilise this stretch: C350–C406 and C382–C411. The segment at 388–401 (DRGWGNGCGLFGKG) is fusion peptide. N444 is a glycosylation site (N-linked (GlcNAc...) asparagine; by host). Cystine bridges form between C480–C581 and C598–C629. A Glycyl lysine isopeptide (Lys-Gly) (interchain with G-Cter in ubiquitin) cross-link involves residue K571. Residues 746 to 767 (LFGGMSWFSQILIGTLLMWLGL) form a helical membrane-spanning segment. Topologically, residues 768 to 773 (NTKNGS) are cytoplasmic. A helical transmembrane segment spans residues 774 to 794 (ISLMCLALGGVLIFLSTAVSA). The Lumenal portion of the chain corresponds to 795–1177 (DVGCSVDFSK…EGLKKRMTTK (383 aa)). Intrachain disulfides connect C798-C809, C849-C937, C973-C1017, C1074-C1123, C1085-C1106, and C1107-C1110. 2 N-linked (GlcNAc...) asparagine; by host glycosylation sites follow: N924 and N1001. A helical transmembrane segment spans residues 1178-1198 (IIISTSMAVLVAMILGGFSMS). Residues 1199–1220 (DLAKLAILMGATFAEMNTGGDV) lie on the Cytoplasmic side of the membrane. Residues 1221 to 1241 (AHLALIAAFKVRPALLVSFIF) form a helical membrane-spanning segment. Residues 1242-1270 (RANWTPRESMLLALASCLLQTAISALEGD) lie on the Lumenal side of the membrane. The chain crosses the membrane as a helical span at residues 1271–1291 (LMVLINGFALAWLAIRAMVVP). Over 1292–1295 (RTDN) the chain is Cytoplasmic. A helical transmembrane segment spans residues 1296 to 1316 (ITLAILAALTPLARGTLLVAW). At 1317 to 1345 (RAGLATCGGFMLLSLKGKGSVKKNLPFVM) the chain is on the lumenal side. A helical transmembrane segment spans residues 1346–1366 (ALGLTAVRLVDPINVVGLLLL). The Cytoplasmic segment spans residues 1367 to 1373 (TRSGKRS). A helical transmembrane segment spans residues 1374 to 1394 (WPPSEVLTAVGLICALAGGFA). At 1395-1397 (KAD) the chain is on the lumenal side. A helical membrane pass occupies residues 1398–1418 (IEMAGPMAAVGLLIVSYVVSG). At 1419 to 1472 (KSVDMYIERAGDITWEKDAEVTGNSPRLDVALDESGDFSLVEDDGPPMREIILK) the chain is on the cytoplasmic side. An interacts with and activates NS3 protease region spans residues 1425 to 1464 (IERAGDITWEKDAEVTGNSPRLDVALDESGDFSLVEDDGP). The tract at residues 1429–1451 (GDITWEKDAEVTGNSPRLDVALD) is disordered. The helical intramembrane region spans 1473 to 1493 (VVLMTICGMNPIAIPFAAGAW). The Lumenal portion of the chain corresponds to 1494-2170 (YVYVKTGKRS…KAAAAQLPET (677 aa)). One can recognise a Peptidase S7 domain in the interval 1503-1680 (SGALWDVPAP…RREEETPVEC (178 aa)). Residues H1553, D1577, and S1637 each act as charge relay system; for serine protease NS3 activity in the active site. The 157-residue stretch at 1683 to 1839 (PSMLKKKQLT…DSNSPIMDTE (157 aa)) folds into the Helicase ATP-binding domain. Residues 1687–1690 (KKKQ) form an important for RNA-binding region. 1696 to 1703 (LHPGAGKT) contacts ATP. Positions 1787–1790 (DEAH) match the DEAH box motif. A Helicase C-terminal domain is found at 1834–2013 (PIMDTEVEVP…GLIASLYRPE (180 aa)). N6-acetyllysine; by host is present on K1891. The chain crosses the membrane as a helical span at residues 2171 to 2191 (LETIMLLGLLGTVSLGIFFVL). The Lumenal segment spans residues 2192–2195 (MRNK). An intramembrane region (helical) is located at residues 2196 to 2216 (GIGKMGFGMVTLGASAWLMWL). Residues 2217 to 2218 (SE) lie on the Cytoplasmic side of the membrane. Residues 2219 to 2239 (IEPARIACVLIVVFLLLVVLI) traverse the membrane as a helical segment. Over 2240 to 2254 (PEPEKQRSPQDNQMA) the chain is Lumenal. Residues 2255–2269 (IIIMVAVGLLGLITA) constitute an intramembrane region (helical). Topologically, residues 2270-2307 (NELGWLERTKSDLSHLMGRREEGATIGFSMDIDLRPAS) are lumenal. The helical intramembrane region spans 2308 to 2328 (AWAIYAALTTFITPAVQHAVT). Residues 2329–2344 (TSYNNYSLMAMATQAG) lie on the Lumenal side of the membrane. A helical membrane pass occupies residues 2345-2365 (VLFGMGKGMPFYAWDFGVPLL). Over 2366-2375 (MIGCYSQLTP) the chain is Cytoplasmic. A helical transmembrane segment spans residues 2376 to 2396 (LTLIVAIILLVAHYMYLIPGL). Residues 2397–2441 (QAAAARAAQKRTAAGIMKNPVVDGIVVTDIDTMTIDPQVEKKMGQ) lie on the Lumenal side of the membrane. The helical transmembrane segment at 2442-2462 (VLLIAVAVSSAILSRTAWGWG) threads the bilayer. Topologically, residues 2463–3423 (EAGALITAAT…GEEGSTPGVL (961 aa)) are cytoplasmic. The mRNA cap 0-1 NS5-type MT domain occupies 2521-2785 (GGGTGETLGE…DVNLGSGTRA (265 aa)). 2533 to 2539 (KARLNQM) lines the GTP pocket. S-adenosyl-L-methionine is bound at residue S2576. The residue at position 2576 (S2576) is a Phosphoserine. The active-site For 2'-O-MTase activity is the K2581. Residues 2597 to 2600 (VIDL) form an SUMO-interacting motif (SIM) region. S-adenosyl-L-methionine-binding residues include G2606, W2607, T2624, K2625, H2630, E2631, D2651, V2652, D2666, and I2667. Catalysis depends on D2666, which acts as the For 2'-O-MTase activity. 2669-2675 (ESSSSPE) is a binding site for GTP. The For 2'-O-MTase activity role is filled by K2702. 2733–2735 (RNS) provides a ligand contact to GTP. Catalysis depends on E2738, which acts as the For 2'-O-MTase activity. Residue Y2740 participates in S-adenosyl-L-methionine binding. The Nuclear localization signal (NLS) motif lies at 2908 to 2914 (KHKRPRV). Residues E2959, H2963, C2968, and C2971 each contribute to the Zn(2+) site. The 151-residue stretch at 3049–3199 (GRMYADDTAG…KPIDDRFAHA (151 aa)) folds into the RdRp catalytic domain. The Zn(2+) site is built by H3234, C3250, and C3369.

The protein in the N-terminal section; belongs to the class I-like SAM-binding methyltransferase superfamily. mRNA cap 0-1 NS5-type methyltransferase family. As to quaternary structure, homodimer. Interacts with host SERTAD3; this interaction promotes capsid protein C degradation. Interacts with host CAPRIN1; this interaction is probably linked to the inhibition of stress granules formation by the virus. Interacts with host G3BP1; this interaction is probably linked to the inhibition of stress granules formation by the virus. In terms of assembly, forms heterodimers with envelope protein E in the endoplasmic reticulum and Golgi. Interacts with non-structural protein 2A. Homodimer; in the endoplasmic reticulum and Golgi. Interacts with host TYRO3, AXL and DC-SIGN proteins. Interacts with non-structural protein 2A. Interacts with host HAVCR1; this interaction likely mediates virus attachment to host cell. Interacts with host NCAM1. Interacts with host HSPA5. Interacts with Aedes aegypti SRPN25, APY and venom allergen-1 salivary proteins; the interactions do not affect Zika virus replication in human endothelial cells and keratinocytes. As to quaternary structure, homodimer; Homohexamer when secreted. Interacts with host TBK1. Interacts with host USP8. Interacts with envelope protein E. In terms of assembly, interacts with the structural protein prM/E complex, and the NS2B/NS3 protease complex. Forms a heterodimer with serine protease NS3. May form homooligomers. Interacts with human SPCS1. Interacts with non-structural protein 2A. As to quaternary structure, forms a heterodimer with NS2B. Interacts with NS4B. Interacts with unphosphorylated RNA-directed RNA polymerase NS5; this interaction stimulates RNA-directed RNA polymerase NS5 guanylyltransferase activity. Interacts with non-structural protein 2A. Interacts with host SHFL; this interaction promotes NS3 degradation via a lysosome-dependent pathway. Interacts with host CEP63; this interaction disorganizes the centrosome and inhibits host innate immune response. In terms of assembly, may interact with host ANKLE2; the interaction may cause defects in brain development, such as microcephaly. May interact with host SRPRA and SEC61G. Interacts with serine protease NS3. Interacts with NS1. As to quaternary structure, homodimer; dimerization may negatively regulate the GTase activity, a crucial step in the capping process. Interacts with host STAT2; this interaction inhibits the phosphorylation of the latter, and, when all viral proteins are present (polyprotein), targets STAT2 for degradation. Interacts with host TBK1 and IKBKE; these interactions lead to the inhibition of the host RIG-I signaling pathway. Interacts with host PAF1 complex; the interaction may prevent the recruitment of the host PAF1 complex to interferon-responsive genes, and thus reduces the immune response. Interacts with serine protease NS3. Interacts with host KPNA2. Interacts with host ZSWIM8; this interaction allows STAT2 binding to ZSWIM8 and subsequent proteasomal degradation leading to inhibition of interferon signaling. In terms of processing, specific enzymatic cleavages in vivo yield mature proteins. Cleavages in the lumen of endoplasmic reticulum are performed by host signal peptidase, whereas cleavages in the cytoplasmic side are performed by serine protease NS3. Signal cleavage at the 2K-4B site requires a prior NS3 protease-mediated cleavage at the 4A-2K site. Post-translationally, cleaved in post-Golgi vesicles by a host furin, releasing the mature small envelope protein M, and peptide pr. This cleavage is incomplete as up to 30% of viral particles still carry uncleaved prM. N-glycosylation plays a role in virulence in mammalian and mosquito hosts, but may have no effect on neurovirulence. In terms of processing, ubiquitination by host TRIM7 promotes virus attachment and fusion of the virus and the host endosome membrane. Post-translationally, N-glycosylated. The excreted form is glycosylated, which is required for efficient secretion of the protein from infected cells. Ubiquitination by host TRIM22 leads to proteasomal degradation. In terms of processing, acetylated by host KAT5. Acetylation modulates NS3 RNA-binding and unwinding activities and plays an important positive role for viral replication. Post-translationally, phosphorylated on serines residues. This phosphorylation may trigger NS5 nuclear localization. Sumoylated, required for regulating IFN induced interferon stimulated genes/ISGs.

The protein resides in the virion. It is found in the host nucleus. Its subcellular location is the host cytoplasm. The protein localises to the host perinuclear region. It localises to the secreted. The protein resides in the virion membrane. It is found in the host endoplasmic reticulum membrane. The catalysed reaction is a 5'-end (5'-triphosphoguanosine)-ribonucleoside in mRNA + S-adenosyl-L-methionine = a 5'-end (N(7)-methyl 5'-triphosphoguanosine)-ribonucleoside in mRNA + S-adenosyl-L-homocysteine. The enzyme catalyses a 5'-end (N(7)-methyl 5'-triphosphoguanosine)-ribonucleoside in mRNA + S-adenosyl-L-methionine = a 5'-end (N(7)-methyl 5'-triphosphoguanosine)-(2'-O-methyl-ribonucleoside) in mRNA + S-adenosyl-L-homocysteine + H(+). It carries out the reaction RNA(n) + a ribonucleoside 5'-triphosphate = RNA(n+1) + diphosphate. It catalyses the reaction Selective hydrolysis of -Xaa-Xaa-|-Yaa- bonds in which each of the Xaa can be either Arg or Lys and Yaa can be either Ser or Ala.. The catalysed reaction is a ribonucleoside 5'-triphosphate + H2O = a ribonucleoside 5'-diphosphate + phosphate + H(+). The enzyme catalyses ATP + H2O = ADP + phosphate + H(+). In terms of biological role, plays a role in virus budding by binding to the cell membrane and gathering the viral RNA into a nucleocapsid that forms the core of the mature virus particle. During virus entry, may induce genome penetration into the host cytoplasm after hemifusion induced by the surface proteins. Can migrate to the cell nucleus where it modulates host functions. Inhibits the integrated stress response (ISR) in the infected cell. Its function is as follows. Inhibits RNA silencing by interfering with host Dicer. Functionally, prevents premature fusion activity of envelope proteins in trans-Golgi by binding to envelope protein E at pH 6.0. After virion release in extracellular space, gets dissociated from E dimers. Plays a role in host immune defense modulation and protection of envelope protein E during virion synthesis. PrM-E cleavage is inefficient, many virions are only partially matured and immature prM-E proteins could play a role in immune evasion. Contributes to fetal microcephaly in humans. Acts as a chaperone for envelope protein E during intracellular virion assembly by masking and inactivating envelope protein E fusion peptide. prM is the only viral peptide matured by host furin in the trans-Golgi network probably to avoid catastrophic activation of the viral fusion activity in acidic Golgi compartment prior to virion release. In terms of biological role, may play a role in virus budding. Exerts cytotoxic effects by activating a mitochondrial apoptotic pathway through M ectodomain. May display a viroporin activity. Its function is as follows. Binds to host cell surface receptors and mediates fusion between viral and cellular membranes. Efficient virus attachment to cell is, at least in part, mediated by host HAVCR1 in a cell-type specific manner. In addition, host NCAM1 can also be used as entry receptor. Interaction with host HSPA5 plays an important role in the early stages of infection as well. Envelope protein is synthesized in the endoplasmic reticulum and forms a heterodimer with protein prM. The heterodimer plays a role in virion budding in the ER, and the newly formed immature particle is covered with 60 spikes composed of heterodimers between precursor prM and envelope protein E. The virion is transported to the Golgi apparatus where the low pH causes the dissociation of PrM-E heterodimers and formation of E homodimers. PrM-E cleavage is inefficient, many virions are only partially matured and immature prM-E proteins could play a role in immune evasion. Functionally, plays a role in the inhibition of host RLR-induced interferon-beta activation by targeting TANK-binding kinase 1/TBK1. In addition, recruits the host deubiquitinase USP8 to cleave 'Lys-11'-linked polyubiquitin chains from caspase-1/CASP1 thus inhibiting its proteasomal degradation. In turn, stabilized CASP1 promotes cleavage of cGAS, which inhibits its ability to recognize mitochondrial DNA release and initiate type I interferon signaling. Component of the viral RNA replication complex that recruits genomic RNA, the structural protein prM/E complex, and the NS2B/NS3 protease complex to the virion assembly site and orchestrates virus morphogenesis. Antagonizes also the host MDA5-mediated induction of alpha/beta interferon antiviral response. May disrupt adherens junction formation and thereby impair proliferation of radial cells in the host cortex. In terms of biological role, required cofactor for the serine protease function of NS3. Its function is as follows. Displays three enzymatic activities: serine protease, NTPase and RNA helicase. NS3 serine protease, in association with NS2B, performs its autocleavage and cleaves the polyprotein at dibasic sites in the cytoplasm: C-prM, NS2A-NS2B, NS2B-NS3, NS3-NS4A, NS4A-2K and NS4B-NS5. NS3 RNA helicase binds RNA and unwinds dsRNA in the 3' to 5' direction. Inhibits the integrated stress response (ISR) in the infected cell by blocking stress granules assembly. Disrupts host centrosome organization in a CEP63-dependent manner to degrade host TBK1 and inhibits innate immune response. Functionally, regulates the ATPase activity of the NS3 helicase activity. NS4A allows NS3 helicase to conserve energy during unwinding. Cooperatively with NS4B suppresses the Akt-mTOR pathway and leads to cellular dysregulation. By inhibiting host ANKLE2 functions, may cause defects in brain development, such as microcephaly. Also antagonizes the host MDA5-mediated induction of alpha/beta interferon antiviral response. Inhibits the integrated stress response (ISR) in the infected cell by blocking stress granules assembly. Functions as a signal peptide for NS4B and is required for the interferon antagonism activity of the latter. In terms of biological role, induces the formation of ER-derived membrane vesicles where the viral replication takes place. Also plays a role in the inhibition of host RLR-induced interferon-beta production at TANK-binding kinase 1/TBK1 level. Cooperatively with NS4A suppresses the Akt-mTOR pathway and leads to cellular dysregulation. Its function is as follows. Replicates the viral (+) and (-) RNA genome, and performs the capping of genomes in the cytoplasm. Methylates viral RNA cap at guanine N-7 and ribose 2'-O positions. Once sufficient NS5 is expressed, binds to the cap-proximal structure and inhibits further translation of the viral genome. Besides its role in RNA genome replication, also prevents the establishment of a cellular antiviral state by blocking the interferon-alpha/beta (IFN-alpha/beta) signaling pathway. Mechanistically, interferes with host kinases TBK1 and IKKE upstream of interferon regulatory factor 3/IRF3 to inhibit the RIG-I pathway. Also antagonizes type I interferon signaling by targeting STAT2 for degradation by the proteasome thereby preventing activation of JAK-STAT signaling pathway. Mechanistically, acts as a scaffold protein to connect host ZSWIM8/CUL3 ligase complex and STAT2, leading to STAT2 degradation. Within the host nucleus, disrupts host SUMO1 and STAT2 co-localization with PML, resulting in PML degradation. May also reduce immune responses by preventing the recruitment of the host PAF1 complex to interferon-responsive genes. The chain is Genome polyprotein from Zika virus (isolate ZIKV/Human/French Polynesia/10087PF/2013) (ZIKV).